We begin with the raw amino-acid sequence, 45 residues long: Large ribosomal subunit protein bL36 (45 aa).

Belongs to the bacterial ribosomal protein bL36 family.

The sequence is that of Large ribosomal subunit protein bL36 from Psychrobacter sp. (strain PRwf-1).